A 3037-amino-acid chain; its full sequence is Genome polyprotein (3037 aa).

Ser-2 bears the N-acetylserine; by host mark. Residues 2–23 (STNPKPQRKTKRNTNRRPQDVK) are interaction with STAT1. The interaction with EIF2AK2/PKR stretch occupies residues 2 to 58 (STNPKPQRKTKRNTNRRPQDVKFPGGGQIVGGVYLLPRRGPRLGVRAARKTSERSQP). The interval 2 to 59 (STNPKPQRKTKRNTNRRPQDVKFPGGGQIVGGVYLLPRRGPRLGVRAARKTSERSQPR) is interaction with DDX3X. The disordered stretch occupies residues 2-75 (STNPKPQRKT…PKDRRSTGKS (74 aa)). The Cytoplasmic segment spans residues 2–168 (STNPKPQRKT…EDGINYATGN (167 aa)). 2 short sequence motifs (nuclear localization signal) span residues 5 to 13 (PKPQRKTKR) and 38 to 43 (PRRGPR). The segment covering 7–16 (PQRKTKRNTN) has biased composition (basic residues). Residues 32 to 47 (GGVYLLPRRGPRLGVR) are compositionally biased toward low complexity. At Ser-53 the chain carries Phosphoserine; by host. 2 consecutive short sequence motifs (nuclear localization signal) follow at residues 58-64 (PRGRRQP) and 66-71 (PKDRRS). A phosphoserine; by host mark is found at Ser-99 and Ser-116. Residues 112–152 (PRHKSRNLGKVIDTLTCGFADLMGYIPVVGAPVGGVARALA) are important for endoplasmic reticulum and mitochondrial localization. The interval 122 to 173 (VIDTLTCGFADLMGYIPVVGAPVGGVARALAHGVRVLEDGINYATGNLPGCS) is interaction with APOA2. Residues 164-167 (YATG) form an important for lipid droplets localization region. The chain crosses the membrane as a helical span at residues 169–189 (LPGCSFSIFLLALLSCISVPV). A propeptide spans 178-191 (LLALLSCISVPVSA) (ER anchor for the core protein, removed in mature form by host signal peptidase). At 190–358 (SAVEVRNTSS…TGGHWGVMFG (169 aa)) the chain is on the lumenal side. Residues Asn-196, Asn-209, and Asn-234 are each glycosylated (N-linked (GlcNAc...) asparagine; by host). Residues 265–296 (IVMSATLCSALYVGDVCGALMIAAQVVVVSPQ) form an important for fusion region. An N-linked (GlcNAc...) asparagine; by host glycan is attached at Asn-305. A helical transmembrane segment spans residues 359 to 379 (LAYFSMQGAWAKVVVILLLTA). Residues 380–729 (GVEASTYTTG…WEWVVLLFLL (350 aa)) lie on the Lumenal side of the membrane. Positions 385 to 412 (TYTTGAVVGRSTHLFTSMFSLGSQQRVQ) are HVR1. N-linked (GlcNAc...) (high mannose) asparagine; by host glycosylation is found at Asn-417, Asn-423, and Asn-430. 4 disulfide bridges follow: Cys-429–Cys-554, Cys-452–Cys-459, Cys-488–Cys-496, and Cys-505–Cys-510. Asn-448 carries N-linked (GlcNAc...) asparagine; by host glycosylation. The segment at 475–480 (EESVTN) is HVR2. The CD81-binding 1 stretch occupies residues 482–495 (ADMRPYCWHYPPRP). Asn-534 is a glycosylation site (N-linked (GlcNAc...) asparagine; by host). Positions 546 to 553 (PPKGAWFG) are CD81-binding 2. N-linked (GlcNAc...) asparagine; by host glycosylation occurs at Asn-558. 4 disulfide bridges follow: Cys-566–Cys-571, Cys-585–Cys-589, Cys-601–Cys-624, and Cys-611–Cys-648. Residues Asn-627 and Asn-649 are each glycosylated (N-linked (GlcNAc...) (high mannose) asparagine; by host). The cysteines at positions 656 and 681 are disulfide-linked. The segment at 664 to 675 (SQLSPLLHSTTE) is PKR/eIF2-alpha phosphorylation homology domain (PePHD). A helical membrane pass occupies residues 730-750 (LADARVCACLWMLLLLGQAEA). The Lumenal portion of the chain corresponds to 751–761 (ALEKLVILHAA). The chain crosses the membrane as a helical span at residues 762 to 782 (SAASSNGLLYFILFFVAAWCI). The Cytoplasmic segment spans residues 783-786 (KGRA). A helical membrane pass occupies residues 787–807 (VPMVTYTLLGCWSFVLLLMAL). Residues 808 to 817 (PHQAYALDAA) lie on the Lumenal side of the membrane. Residues 818 to 838 (EQGQIGMALLIAITAFTITPA) form a helical membrane-spanning segment. The Cytoplasmic portion of the chain corresponds to 839–885 (YKILLSRCLWWTCYMLVLAEALIQDWIPPLQARGGRDGVIWAMTMFY). Residues 886–906 (PGVVFDITKWLLAILGPGYLF) form a helical membrane-spanning segment. The Peptidase C18 domain maps to 905-1030 (LFRAAVMRTP…GYTSKGWRLL (126 aa)). The Lumenal portion of the chain corresponds to 907–932 (RAAVMRTPYFVRANALLRMCALVKQL). The protease NS2-3 stretch occupies residues 908 to 1210 (AAVMRTPYFV…PVESLDVVTR (303 aa)). Residue Cys-926 is the site of S-palmitoyl cysteine; by host attachment. The helical transmembrane segment at 933-953 (AGGKYVQVALITLGKWTGTYI) threads the bilayer. Residues 933–953 (AGGKYVQVALITLGKWTGTYI) are interaction with host SCPS1. Residues 954 to 1661 (YDHLSPMSDW…CMQADLEIMT (708 aa)) lie on the Cytoplasmic side of the membrane. Catalysis depends on for protease NS2 activity; shared with dimeric partner residues His-956, Glu-976, and Cys-997. The region spanning 1031–1212 (APITAYAQQT…ESLDVVTRSP (182 aa)) is the Peptidase S29 domain. Catalysis depends on charge relay system; for serine protease NS3 activity residues His-1087 and Asp-1111. 2 residues coordinate Zn(2+): Cys-1127 and Cys-1129. The active-site Charge relay system; for serine protease NS3 activity is the Ser-1169. Residues Cys-1175 and His-1179 each contribute to the Zn(2+) site. The Helicase ATP-binding domain occupies 1221 to 1373 (PAVPQTYQVG…PNIEEVALGH (153 aa)). 1234-1241 (APTGSGKS) serves as a coordination point for ATP. The Mg(2+) site is built by Ser-1241 and Glu-1321. The short motif at 1320–1323 (DECH) is the DECH box element. The RNA-binding stretch occupies residues 1490–1502 (QRRGRTGRGRLGI). The helical transmembrane segment at 1662 to 1682 (STWVLAGGVLAAVAAYCLATG) threads the bilayer. An NS3-binding region spans residues 1683 to 1694 (CVSIIGRIHVNQ). The Cytoplasmic segment spans residues 1683 to 1809 (CVSIIGRIHV…ALTSPLSTST (127 aa)). A helical membrane pass occupies residues 1810–1830 (TILLNIMGGWLASQIAPPAGA). Residues 1831-1832 (TG) are Lumenal-facing. Residues 1833-1853 (FVVSGLVGAAVGSIGLGKILV) traverse the membrane as a helical segment. A topological domain (cytoplasmic) is located at residue Asp-1854. The helical transmembrane segment at 1855-1875 (VLAGYGAGISGALVAFKIMSG) threads the bilayer. The Lumenal segment spans residues 1876-1885 (EKPSVEDVVN). A helical transmembrane segment spans residues 1886–1906 (LLPAILSPGALVVGVICAAIL). Over 1907–1976 (RRHVGQGEGA…WITEDCPVPC (70 aa)) the chain is Cytoplasmic. Cys-1976 is lipidated: S-palmitoyl cysteine; by host. The stretch at 1977–2006 (SGSWLRDVWDWVCSILIDFKNWLSAKLFPR) is an intramembrane region. Residues 2007–3016 (LPGIPFISCQ…YHSVSRARPR (1010 aa)) are Cytoplasmic-facing. Zn(2+)-binding residues include Cys-2015, Cys-2033, Cys-2035, and Cys-2056. The FKBP8-binding stretch occupies residues 2124-2212 (EFFSWVDGVQ…ASSSASQLSA (89 aa)). Residues 2124 to 2336 (EFFSWVDGVQ…PVPPPRRRRA (213 aa)) are transcriptional activation. Positions 2139–2143 (PTPKA) are interaction with non-structural protein 4A. Positions 2193–2464 (RLARGSPPSA…ALITPCSPEE (272 aa)) are interaction with host SKP2. A phosphoserine; by host mark is found at Ser-2198, Ser-2201, Ser-2205, Ser-2208, Ser-2211, and Ser-2214. The interval 2214–2253 (SLRATCTTHAKCPDIDMVDANLFCWCTMGGNMTRIESESK) is ISDR. The interaction with EIF2AK2/PKR stretch occupies residues 2214–2279 (SLRATCTTHA…REPSIPSEYL (66 aa)). The NS4B-binding stretch occupies residues 2253-2310 (KVLMVDSFDPVVDKEDEREPSIPSEYLLPKSRFPPALPPWARPDYNPPLLETWKRPDY). Positions 2303–2381 (ETWKRPDYQP…GTTGETSKSP (79 aa)) are V3. An SH3-binding motif is present at residues 2326-2329 (TPVP). The Nuclear localization signal motif lies at 2331-2339 (PRRRRAVVL). Lys-2354 participates in a covalent cross-link: Glycyl lysine isopeptide (Lys-Gly) (interchain with G-Cter in ubiquitin). A disordered region spans residues 2354-2434 (KSFGCPPPSG…APGSDSGSWS (81 aa)). Residues 2402–2411 (EPGDPDLEPE) are compositionally biased toward acidic residues. 2 positions are modified to phosphoserine; by host: Ser-2475 and Ser-2488. The RdRp catalytic domain occupies 2660–2778 (PMGFSYDTRC…ISESQGVEED (119 aa)). Mg(2+)-binding residues include Asp-2666, Asp-2764, and Asp-2765. The chain crosses the membrane as a helical span at residues 3017–3037 (LLLLGLLLLCVGVGIFLLPAR).

The protein belongs to the hepacivirus polyprotein family. In terms of assembly, homooligomer. Interacts with E1 (via C-terminus). Interacts with the non-structural protein 5A. Interacts (via N-terminus) with host STAT1 (via SH2 domain); this interaction results in decreased STAT1 phosphorylation and ubiquitin-mediated proteasome-dependent STAT1 degradation, leading to decreased IFN-stimulated gene transcription. Interacts with host STAT3; this interaction constitutively activates STAT3. Interacts with host LTBR receptor. Interacts with host TNFRSF1A receptor and possibly induces apoptosis. Interacts with host HNRPK. Interacts with host YWHAE. Interacts with host UBE3A/E6AP. Interacts with host DDX3X. Interacts with host APOA2. Interacts with host RXRA protein. Interacts with host SP110 isoform 3/Sp110b; this interaction sequesters the transcriptional corepressor SP110 away from the nucleus. Interacts with host CREB3 nuclear transcription protein; this interaction triggers cell transformation. Interacts with host ACY3. Interacts with host C1QR1. Interacts with host RBM24; this interaction, which enhances the interaction of the mature core protein with 5'-UTR, may inhibit viral translation and favor replication. Interacts with host EIF2AK2/PKR; this interaction induces the autophosphorylation of EIF2AK2. Part of the viral assembly initiation complex composed of NS2, E1, E2, NS3, NS4A, NS5A and the mature core protein. As to quaternary structure, forms a heterodimer with envelope glycoprotein E2. Interacts with mature core protein. Interacts with protease NS2. The heterodimer E1/E2 interacts with host CLDN1; this interaction plays a role in viral entry into host cell. Interacts with host SPSB2 (via C-terminus). Part of the viral assembly initiation complex composed of NS2, E1, E2, NS3, NS4A, NS5A and the mature core protein. Interacts with host NEURL3; this interaction prevents E1 binding to glycoprotein E2. Forms a heterodimer with envelope glycoprotein E1. Interacts with host CD81 and SCARB1 receptors; these interactions play a role in viral entry into host cell. Interacts with host EIF2AK2/PKR; this interaction inhibits EIF2AK2 and probably allows the virus to evade the innate immune response. Interacts with host CD209/DC-SIGN and CLEC4M/DC-SIGNR. Interact with host SPCS1; this interaction is essential for viral particle assembly. Interacts with protease NS2. The heterodimer E1/E2 interacts with host CLDN1; this interaction plays a role in viral entry into host cell. Part of the viral assembly initiation complex composed of NS2, E1, E2, NS3, NS4A, NS5A and the mature core protein. Interacts with host SLC3A2/4F2hc; the interaction may facilitate viral entry into host cell. Interacts with human PLSCR1. In terms of assembly, homohexamer. Homoheptamer. Interacts with protease NS2. As to quaternary structure, homodimer. Interacts with host SPCS1; this interaction is essential for viral particle assembly. Interacts with envelope glycoprotein E1. Interacts with envelope glycoprotein E2. Interacts with viroporin p7. Interacts with serine protease/helicase NS3. Part of the replication complex composed of NS2, NS3, NS4A, NS4B, NS5A and the RNA-directed RNA polymerase embedded in an ER-derived membranous web. Part of the viral assembly initiation complex composed of NS2, E1, E2, NS3, NS4A, NS5A and the mature core protein. Interacts with protease NS2. Interacts with non-structural protein 4A; this interaction stabilizes the folding of NS3 serine protease. NS3-NS4A interaction is essential for NS3 activation and allows membrane anchorage of the latter. NS3/NS4A complex also prevents phosphorylation of host IRF3, thus preventing the establishment of dsRNA induced antiviral state. Interacts with host MAVS; this interaction leads to the cleavage and inhibition of host MAVS. Interacts with host TICAM1; this interaction leads to the cleavage and inhibition of host TICAM1. Interacts with host TANK-binding kinase/TBK1; this interaction results in the inhibition of the association between TBK1 and IRF3, which leads to the inhibition of IRF3 activation. Interacts with host RBM24. Part of the replication complex composed of NS2, NS3, NS4A, NS4B, NS5A and the RNA-directed RNA polymerase embedded in an ER-derived membranous web. Part of the viral assembly initiation complex composed of NS2, E1, E2, NS3, NS4A, NS5A and the mature core protein. In terms of assembly, interacts with NS3 serine protease; this interaction stabilizes the folding of NS3 serine protease. NS3-NS4A interaction is essential for NS3 activation and allows membrane anchorage of the latter. Interacts with non-structural protein 5A (via N-terminus). Part of the replication complex composed of NS2, NS3, NS4A, NS4B, NS5A and the RNA-directed RNA polymerase embedded in an ER-derived membranous web. Part of the viral assembly initiation complex composed of NS2, E1, E2, NS3, NS4A, NS5A and the mature core protein. As to quaternary structure, homomultimer. Interacts with non-structural protein NS5A. Interacts with host PLA2G4C; this interaction likely initiates the recruitment of replication complexes to lipid droplets. Interacts with host STING; this interaction disrupts the interaction between STING and TBK1 thereby suppressing the interferon signaling. Part of the replication complex composed of NS2, NS3, NS4A, NS4B, NS5A and the RNA-directed RNA polymerase embedded in an ER-derived membranous web. Monomer. Homodimer; dimerization is required for RNA-binding. Interacts with the mature core protein. Interacts (via N-terminus) with non-structural protein 4A. Interacts with non-structural protein 4B. Interacts (via region D2) with RNA-directed RNA polymerase. Part of the viral assembly initiation complex composed of NS2, E1, E2, NS3, NS4A, NS5A and the mature core protein. Part of the replication complex composed of NS2, NS3, NS4A, NS4B, NS5A and the RNA-directed RNA polymerase embedded in an ER-derived membranous web. Interacts with host GRB2. Interacts with host BIN1. Interacts with host PIK3R1. Interacts with host SRCAP. Interacts with host FKBP8. Interacts (via C-terminus) with host VAPB (via MSP domain). Interacts with host EIF2AK2/PKR; this interaction leads to disruption of EIF2AK2 dimerization by NS5A and probably allows the virus to evade the innate immune response. Interacts (via N-terminus) with host PACSIN2 (via N-terminus); this interaction attenuates protein kinase C alpha-mediated phosphorylation of PACSIN2 by disrupting the interaction between PACSIN2 and PRKCA. Interacts (via N-terminus) with host SRC kinase (via SH2 domain). Interacts with most Src-family kinases. Interacts with host IFI27 and SKP2; promotes the ubiquitin-mediated proteasomal degradation of NS5A. Interacts with host GPS2. Interacts with host TNFRSF21; this interaction allows the modulation by the virus of JNK, p38 MAPK, STAT3, and Akt signaling pathways in a DR6-dependent manner. Interacts (via N-terminus) with host CIDEB (via N-terminus); this interaction seems to regulate the association of HCV particles with APOE. Interacts with host CHKA/Choline Kinase-alpha; CHKA bridges host PI4KA and NS5A and potentiates NS5A-stimulated PI4KA activity, which then facilitates the targeting of the ternary complex to the ER for viral replication. Interacts with host SPSB2 (via C-terminus); this interaction targets NS5A for ubiquitination and degradation. Interacts with host RAB18; this interaction may promote the association of NS5A and other replicase components with lipid droplets. Interacts (via region D2) with host PPIA/CYPA; the interaction stimulates RNA-binding ability of NS5A and is dependent on the peptidyl-prolyl cis-trans isomerase activity of PPIA/CYPA. Interacts with host TRIM14; this interaction induces the degradation of NS5A. In terms of assembly, homooligomer. Interacts with non-structural protein 5A. Interacts with host VAPB. Interacts with host PRK2/PKN2. Interacts with host HNRNPA1 and SEPT6; these interactions facilitate viral replication. Part of the replication complex composed of NS2, NS3, NS4A, NS4B, NS5A and the RNA-directed RNA polymerase. Zn(2+) is required as a cofactor. It depends on Mg(2+) as a cofactor. In terms of processing, specific enzymatic cleavages in vivo yield mature proteins. The structural proteins, core, E1, E2 and p7 are produced by proteolytic processing by host signal peptidases. The core protein precursor is synthesized as a 23 kDa, which is retained in the ER membrane through the hydrophobic signal peptide. Cleavage by the signal peptidase releases the 21 kDa mature core protein. The cleavage of the core protein precursor occurs between aminoacids 176 and 188 but the exact cleavage site is not known. Some degraded forms of the core protein appear as well during the course of infection. The other proteins (p7, NS2, NS3, NS4A, NS4B, NS5A and NS5B) are cleaved by the viral proteases. Autoprocessing between NS2 and NS3 is mediated by the NS2 cysteine protease catalytic domain and regulated by the NS3 N-terminal domain. Phosphorylated by host PKC and PKA. Post-translationally, ubiquitinated; mediated by UBE3A and leading to core protein subsequent proteasomal degradation. In terms of processing, highly N-glycosylated. Palmitoylation is required for NS2/3 autoprocessing and E2 recruitment to membranes. Post-translationally, palmitoylated. This modification may play a role in its polymerization or in protein-protein interactions. In terms of processing, phosphorylated on serines in a basal form termed p56. p58 is a hyperphosphorylated form of p56. p56 and p58 coexist in the cell in roughly equivalent amounts. Hyperphosphorylation is dependent on the presence of NS4A. Host CSNK1A1/CKI-alpha or RPS6KB1 kinases may be responsible for NS5A phosphorylation. Tyrosine phosphorylation is essential for the interaction with host SRC. Post-translationally, the N-terminus is phosphorylated by host PRK2/PKN2.

The protein localises to the host endoplasmic reticulum membrane. It localises to the host mitochondrion membrane. The protein resides in the virion. Its subcellular location is the host cytoplasm. It is found in the host nucleus. The protein localises to the host lipid droplet. It localises to the virion membrane. The protein resides in the host mitochondrion. Its subcellular location is the host cell membrane. It is found in the host perinuclear region. The catalysed reaction is Hydrolysis of four peptide bonds in the viral precursor polyprotein, commonly with Asp or Glu in the P6 position, Cys or Thr in P1 and Ser or Ala in P1'.. It catalyses the reaction a ribonucleoside 5'-triphosphate + H2O = a ribonucleoside 5'-diphosphate + phosphate + H(+). It carries out the reaction ATP + H2O = ADP + phosphate + H(+). The enzyme catalyses RNA(n) + a ribonucleoside 5'-triphosphate = RNA(n+1) + diphosphate. Inhibited by the antiviral drug hexamethylene amiloride. Inhibition by amantadine appears to be genotype-dependent. Also inhibited by long-alkyl-chain iminosugar derivatives. With respect to regulation, activity is up-regulated by PRK2/PKN2-mediated phosphorylation. In terms of biological role, packages viral RNA to form a viral nucleocapsid, and promotes virion budding. Participates in the viral particle production as a result of its interaction with the non-structural protein 5A. Binds RNA and may function as a RNA chaperone to induce the RNA structural rearrangements taking place during virus replication. Modulates viral translation initiation by interacting with viral IRES and 40S ribosomal subunit. Affects various cell signaling pathways, host immunity and lipid metabolism. Prevents the establishment of cellular antiviral state by blocking the interferon-alpha/beta (IFN-alpha/beta) and IFN-gamma signaling pathways and by blocking the formation of phosphorylated STAT1 and promoting ubiquitin-mediated proteasome-dependent degradation of STAT1. Activates STAT3 leading to cellular transformation. Regulates the activity of cellular genes, including c-myc and c-fos. May repress the promoter of p53, and sequester CREB3 and SP110 isoform 3/Sp110b in the cytoplasm. Represses cell cycle negative regulating factor CDKN1A, thereby interrupting an important check point of normal cell cycle regulation. Targets transcription factors involved in the regulation of inflammatory responses and in the immune response: suppresses TNF-induced NF-kappa-B activation, and activates AP-1. Binds to dendritic cells (DCs) via C1QR1, resulting in down-regulation of T-lymphocytes proliferation. Alters lipid metabolism by interacting with hepatocellular proteins involved in lipid accumulation and storage. Induces up-regulation of FAS promoter activity, and thereby contributes to the increased triglyceride accumulation in hepatocytes (steatosis). Functionally, forms a heterodimer with envelope glycoprotein E2, which mediates virus attachment to the host cell, virion internalization through clathrin-dependent endocytosis and fusion with host membrane. Fusion with the host cell is most likely mediated by both E1 and E2, through conformational rearrangements of the heterodimer required for fusion rather than a classical class II fusion mechanism. E1/E2 heterodimer binds host apolipoproteins such as APOB and ApoE thereby forming a lipo-viro-particle (LVP). APOE associated to the LVP allows the initial virus attachment to cell surface receptors such as the heparan sulfate proteoglycans (HSPGs), syndecan-1 (SDC1), syndecan-1 (SDC2), the low-density lipoprotein receptor (LDLR) and scavenger receptor class B type I (SCARB1). The cholesterol transfer activity of SCARB1 allows E2 exposure and binding of E2 to SCARB1 and the tetraspanin CD81. E1/E2 heterodimer binding on CD81 activates the epithelial growth factor receptor (EGFR) signaling pathway. Diffusion of the complex E1-E2-EGFR-SCARB1-CD81 to the cell lateral membrane allows further interaction with Claudin 1 (CLDN1) and occludin (OCLN) to finally trigger HCV entry. Its function is as follows. Forms a heterodimer with envelope glycoprotein E1, which mediates virus attachment to the host cell, virion internalization through clathrin-dependent endocytosis and fusion with host membrane. Fusion with the host cell is most likely mediated by both E1 and E2, through conformational rearrangements of the heterodimer required for fusion rather than a classical class II fusion mechanism. The interaction between envelope glycoprotein E2 and host apolipoprotein E/APOE allows the proper assembly, maturation and infectivity of the viral particles. This interaction is probably promoted via the up-regulation of cellular autophagy by the virus. E1/E2 heterodimer binds host apolipoproteins such as APOB and APOE thereby forming a lipo-viro-particle (LVP). APOE associated to the LVP allows the initial virus attachment to cell surface receptors such as the heparan sulfate proteoglycans (HSPGs), syndecan-1 (SDC1), syndecan-1 (SDC2), the low-density lipoprotein receptor (LDLR) and scavenger receptor class B type I (SCARB1). The cholesterol transfer activity of SCARB1 allows E2 exposure and binding of E2 to SCARB1 and the tetraspanin CD81. E1/E2 heterodimer binding on CD81 activates the epithelial growth factor receptor (EGFR) signaling pathway. Diffusion of the complex E1-E2-EGFR-SCARB1-CD81 to the cell lateral membrane allows further interaction with Claudin 1 (CLDN1) and occludin (OCLN) to finally trigger HCV entry. Inhibits host EIF2AK2/PKR activation, preventing the establishment of an antiviral state. Viral ligand for CD209/DC-SIGN and CLEC4M/DC-SIGNR, which are respectively found on dendritic cells (DCs), and on liver sinusoidal endothelial cells and macrophage-like cells of lymph node sinuses. These interactions allow the capture of circulating HCV particles by these cells and subsequent facilitated transmission to permissive cells such as hepatocytes and lymphocyte subpopulations. The interaction between E2 and host amino acid transporter complex formed by SLC3A2 and SLC7A5/LAT1 may facilitate viral entry into host cell. Ion channel protein that acts as a viroporin and plays an essential role in the assembly, envelopment and secretion of viral particles. Regulates the host cell secretory pathway, which induces the intracellular retention of viral glycoproteins and favors assembly of viral particles. Creates a pore in acidic organelles and releases Ca(2+) and H(+) in the cytoplasm of infected cells, leading to a productive viral infection. High levels of cytoplasmic Ca(2+) may trigger membrane trafficking and transport of viral ER-associated proteins to viroplasms, sites of viral genome replication. This ionic imbalance induces the assembly of the inflammasome complex, which triggers the maturation of pro-IL-1beta into IL-1beta through the action of caspase-1. Targets also host mitochondria and induces mitochondrial depolarization. In addition of its role as a viroporin, acts as a lipid raft adhesion factor. In terms of biological role, cysteine protease required for the proteolytic auto-cleavage between the non-structural proteins NS2 and NS3. The N-terminus of NS3 is required for the function of NS2 protease (active region NS2-3). Promotes the initiation of viral particle assembly by mediating the interaction between structural and non-structural proteins. Functionally, displays three enzymatic activities: serine protease with a chymotrypsin-like fold, NTPase and RNA helicase. NS3 serine protease, in association with NS4A, is responsible for the cleavages of NS3-NS4A, NS4A-NS4B, NS4B-NS5A and NS5A-NS5B. The NS3/NS4A complex prevents phosphorylation of host IRF3, thus preventing the establishment of dsRNA induced antiviral state. The NS3/NS4A complex induces host amino acid transporter component SLC3A2, thus contributing to HCV propagation. NS3 RNA helicase binds to RNA and unwinds both dsDNA and dsRNA in the 3' to 5' direction, and likely resolves RNA complicated stable secondary structures in the template strand. Binds a single ATP and catalyzes the unzipping of a single base pair of dsRNA. Inhibits host antiviral proteins TBK1 and IRF3 thereby preventing the establishment of an antiviral state. Cleaves host MAVS/CARDIF thereby preventing the establishment of an antiviral state. Cleaves host TICAM1/TRIF, thereby disrupting TLR3 signaling and preventing the establishment of an antiviral state. Its function is as follows. Induces a specific membrane alteration that serves as a scaffold for the virus replication complex. This membrane alteration gives rise to the so-called ER-derived membranous web that contains the replication complex. NS4B self-interaction contributes to its function in membranous web formation. Promotes host TRIF protein degradation in a CASP8-dependent manner thereby inhibiting host TLR3-mediated interferon signaling. Disrupts the interaction between STING and TBK1 contributing to the inhibition of interferon signaling. Phosphorylated protein that is indispensable for viral replication and assembly. Both hypo- and hyperphosphorylated states are required for the viral life cycle. The hyperphosphorylated form of NS5A is an inhibitor of viral replication. Involved in RNA-binding and especially in binding to the viral genome. Zinc is essential for RNA-binding. Participates in the viral particle production as a result of its interaction with the mature viral core protein. Its interaction with host VAPB may target the viral replication complex to vesicles. Down-regulates viral IRES translation initiation. Mediates interferon resistance, presumably by interacting with and inhibiting host EIF2AK2/PKR. Prevents BIN1-induced apoptosis. Acts as a transcriptional activator of some host genes important for viral replication when localized in the nucleus. Via the interaction with host PACSIN2, modulates lipid droplet formation in order to promote virion assembly. Modulates TNFRSF21/DR6 signaling pathway for viral propagation. In terms of biological role, RNA-dependent RNA polymerase that performs primer-template recognition and RNA synthesis during viral replication. Initiates RNA transcription/replication at a flavin adenine dinucleotide (FAD), resulting in a 5'- FAD cap on viral RNAs. In this way, recognition of viral 5' RNA by host pattern recognition receptors can be bypassed, thereby evading activation of antiviral pathways. The protein is Genome polyprotein of Hepatitis C virus genotype 2c (isolate BEBE1) (HCV).